Here is a 1413-residue protein sequence, read N- to C-terminus: DNA-directed RNA polymerase subunit beta' (1413 aa).

Residues C70, C72, C85, and C88 each contribute to the Zn(2+) site. 3 residues coordinate Mg(2+): D460, D462, and D464. 4 residues coordinate Zn(2+): C814, C888, C895, and C898.

The protein belongs to the RNA polymerase beta' chain family. As to quaternary structure, the RNAP catalytic core consists of 2 alpha, 1 beta, 1 beta' and 1 omega subunit. When a sigma factor is associated with the core the holoenzyme is formed, which can initiate transcription. Mg(2+) serves as cofactor. It depends on Zn(2+) as a cofactor.

It catalyses the reaction RNA(n) + a ribonucleoside 5'-triphosphate = RNA(n+1) + diphosphate. In terms of biological role, DNA-dependent RNA polymerase catalyzes the transcription of DNA into RNA using the four ribonucleoside triphosphates as substrates. The polypeptide is DNA-directed RNA polymerase subunit beta' (Buchnera aphidicola subsp. Schizaphis graminum (strain Sg)).